Reading from the N-terminus, the 142-residue chain is Transcriptional regulator MraZ (142 aa).

SpoVT-AbrB domains are found at residues 5 to 51 and 77 to 120; these read ASSL…PRPE and AMDV…DKAS.

Belongs to the MraZ family. As to quaternary structure, forms oligomers.

It is found in the cytoplasm. It localises to the nucleoid. The protein is Transcriptional regulator MraZ of Verminephrobacter eiseniae (strain EF01-2).